The primary structure comprises 248 residues: Triosephosphate isomerase (248 aa).

9-11 (NWK) is a binding site for substrate. The active-site Electrophile is histidine 94. Glutamate 166 serves as the catalytic Proton acceptor. Substrate contacts are provided by residues glycine 172, serine 212, and 233–234 (GG).

It belongs to the triosephosphate isomerase family. Homodimer.

The protein resides in the cytoplasm. It catalyses the reaction D-glyceraldehyde 3-phosphate = dihydroxyacetone phosphate. Its pathway is carbohydrate biosynthesis; gluconeogenesis. It participates in carbohydrate degradation; glycolysis; D-glyceraldehyde 3-phosphate from glycerone phosphate: step 1/1. In terms of biological role, involved in the gluconeogenesis. Catalyzes stereospecifically the conversion of dihydroxyacetone phosphate (DHAP) to D-glyceraldehyde-3-phosphate (G3P). In Caldanaerobacter subterraneus subsp. tengcongensis (strain DSM 15242 / JCM 11007 / NBRC 100824 / MB4) (Thermoanaerobacter tengcongensis), this protein is Triosephosphate isomerase.